The chain runs to 100 residues: NADH-quinone oxidoreductase subunit K (100 aa).

Transmembrane regions (helical) follow at residues 4–24 (LSHA…AIIV), 29–49 (LFIL…FVIV), and 60–80 (IMYI…LALL).

Belongs to the complex I subunit 4L family. As to quaternary structure, NDH-1 is composed of 13 different subunits. Subunits NuoA, H, J, K, L, M, N constitute the membrane sector of the complex.

It is found in the cell inner membrane. It carries out the reaction a quinone + NADH + 5 H(+)(in) = a quinol + NAD(+) + 4 H(+)(out). NDH-1 shuttles electrons from NADH, via FMN and iron-sulfur (Fe-S) centers, to quinones in the respiratory chain. The immediate electron acceptor for the enzyme in this species is believed to be ubiquinone. Couples the redox reaction to proton translocation (for every two electrons transferred, four hydrogen ions are translocated across the cytoplasmic membrane), and thus conserves the redox energy in a proton gradient. The protein is NADH-quinone oxidoreductase subunit K of Blochmanniella pennsylvanica (strain BPEN).